Here is a 92-residue protein sequence, read N- to C-terminus: Probable Fe(2+)-trafficking protein (92 aa).

Belongs to the Fe(2+)-trafficking protein family.

Functionally, could be a mediator in iron transactions between iron acquisition and iron-requiring processes, such as synthesis and/or repair of Fe-S clusters in biosynthetic enzymes. In Shewanella woodyi (strain ATCC 51908 / MS32), this protein is Probable Fe(2+)-trafficking protein.